Consider the following 827-residue polypeptide: Protein Jade-1 (827 aa).

Residues 1 to 35 form a disordered region; it reads MKRVCLPSSSEDSDDNGSLSTSWSQHSRSLPSFRH. The segment covering 16–30 has biased composition (polar residues); that stretch reads NGSLSTSWSQHSRSL. A PHD-type 1 zinc finger spans residues 200-250; it reads DVVCDVCQSPDGEDGNEMVFCDKCNICVHQACYGILKVPEGSWLCRTCALG. Residues 252 to 286 form a C2HC pre-PHD-type zinc finger; sequence QPKCLLCPKKGGAMKPTRSGTKWVHVSCALWIPEV. Residues 310–366 form a PHD-type 2 zinc finger; the sequence is LLCSLCNEKVGACIQCSIKNCRTAFHVTCAFDHGLEMKTILTQEDEVKFKSYCPKHG. Disordered stretches follow at residues 622–705 and 769–810; these read TVAK…SSSL and RTKE…SSSS. 2 stretches are compositionally biased toward basic and acidic residues: residues 646 to 661 and 669 to 682; these read SRTQ…EKPL and KHTE…EKKR. Residues 692–705 are compositionally biased toward polar residues; the sequence is ATASSNKKQCSSSL.

It belongs to the JADE family. Component of the HBO1 complex composed.

The protein localises to the nucleus. The protein resides in the chromosome. It is found in the cytoplasm. It localises to the cytoskeleton. Its subcellular location is the cilium basal body. In terms of biological role, scaffold subunit of some HBO1 complexes, which have a histone H4 acetyltransferase activity. Plays a key role in HBO1 complex by directing KAT7/HBO1 specificity towards histone H4 acetylation (H4K5ac, H4K8ac and H4K12ac), regulating DNA replication initiation, regulating DNA replication initiation. This chain is Protein Jade-1 (jade1), found in Xenopus laevis (African clawed frog).